A 973-amino-acid polypeptide reads, in one-letter code: UvrABC system protein A (973 aa).

34-41 (GLSGSGKS) is a binding site for ATP. ABC transporter domains lie at 331–609 (WAKS…PKSL) and 629–958 (PKKK…QFLK). 662-669 (GVSGGGKS) provides a ligand contact to ATP. The C4-type zinc-finger motif lies at 761–787 (CEACQGDGVIKIEMHFLPDVYVTCDVC).

It belongs to the ABC transporter superfamily. UvrA family. In terms of assembly, forms a heterotetramer with UvrB during the search for lesions.

The protein localises to the cytoplasm. Its function is as follows. The UvrABC repair system catalyzes the recognition and processing of DNA lesions. UvrA is an ATPase and a DNA-binding protein. A damage recognition complex composed of 2 UvrA and 2 UvrB subunits scans DNA for abnormalities. When the presence of a lesion has been verified by UvrB, the UvrA molecules dissociate. This Rhizobium meliloti (strain 1021) (Ensifer meliloti) protein is UvrABC system protein A.